Consider the following 501-residue polypeptide: Lysine--tRNA ligase (501 aa).

Asp-411 and Glu-418 together coordinate Mg(2+).

The protein belongs to the class-II aminoacyl-tRNA synthetase family. As to quaternary structure, homodimer. Mg(2+) is required as a cofactor.

It is found in the cytoplasm. It catalyses the reaction tRNA(Lys) + L-lysine + ATP = L-lysyl-tRNA(Lys) + AMP + diphosphate. The sequence is that of Lysine--tRNA ligase from Mycolicibacterium gilvum (strain PYR-GCK) (Mycobacterium gilvum (strain PYR-GCK)).